The following is a 346-amino-acid chain: L-glyceraldehyde 3-phosphate reductase (346 aa).

NADP(+)-binding residues include Trp33, Asp61, Tyr66, Ser168, Gln193, Thr223, Leu225, Gln227, Lys233, Ser303, Gln307, and Asn311.

The protein belongs to the shaker potassium channel beta subunit family. As to quaternary structure, homotetramer. Homooctamer.

The catalysed reaction is a primary alcohol + NADP(+) = an aldehyde + NADPH + H(+). It catalyses the reaction hydroxyacetone + NADP(+) = methylglyoxal + NADPH + H(+). In terms of biological role, aldo-keto reductase that catalyzes the stereospecific, NADPH-dependent reduction of L-glyceraldehyde 3-phosphate (L-GAP) to L-glycerol 3-phosphate (L-G3P). The physiological role of Gpr is the detoxification of L-GAP, which may be formed via non-enzymatic and/or enzymatic racemization of D-GAP. Also contributes to cellular methylglyoxal detoxification by catalyzing the NADPH-dependent conversion of methylglyoxal to acetol. However, the catalytic efficiency of methylglyoxal reductase activity is more than 2 orders of magnitude lower than the L-GAP reductase activity. In addition, exhibits activity with glyoxal and probably plays a significant role in detoxification of glyoxal in vivo. Shows broad specificity and can use aromatic aldehydes such as 4-nitrobenzaldehyde and benzaldehyde, D,L-glyceraldehyde, phenylglyoxal, isatin and the model substrate 4-nitrobenzaldehyde. This chain is L-glyceraldehyde 3-phosphate reductase, found in Escherichia coli (strain K12).